A 119-amino-acid polypeptide reads, in one-letter code: uncharacterized protein (119 aa).

2 helical membrane passes run 61–80 and 87–103; these read LISASSCSSLVSSPFFLLSV and VVGVVVIDGFVVSVDII.

Its subcellular location is the membrane. This is an uncharacterized protein from Saccharomyces cerevisiae (strain ATCC 204508 / S288c) (Baker's yeast).